Here is a 783-residue protein sequence, read N- to C-terminus: DNA repair and recombination protein RAD54-like (783 aa).

The segment at 2–9 (RRSLAPSQ) is required for chromatin remodeling, strand pairing activities and coupling of ATPase activity. Residue threonine 22 is modified to Phosphothreonine. A Helicase ATP-binding domain is found at 165–340 (EGKRGNFNGC…FSLVNFVNPE (176 aa)). ATP is bound at residue 178–185 (DEMGLGKT). The DEGH box signature appears at 291-294 (DEGH). The 158-residue stretch at 497-654 (LLDFMLAAIR…NNESSEKHFT (158 aa)) folds into the Helicase C-terminal domain. Residues 737–783 (AESKPAAITEDDESEQQQQSPKRTSKNDDNDEDFDPENSAEEQFLGF) form a disordered region. The span at 765 to 776 (DNDEDFDPENSA) shows a compositional bias: acidic residues.

Belongs to the SNF2/RAD54 helicase family. As to quaternary structure, interacts (via N-terminus) with spn-A/Rad51.

The protein localises to the nucleus. Functionally, involved in mitotic DNA repair and meiotic recombination. Functions in the recombinational DNA repair pathway. Essential for interhomolog gene conversion (GC), but may have a less important role in intersister GC than spn-A/Rad51. In the presence of DNA, spn-A/Rad51 enhances the ATPase activity of okr/Rad54. This chain is DNA repair and recombination protein RAD54-like, found in Drosophila mojavensis (Fruit fly).